A 124-amino-acid chain; its full sequence is Small ribosomal subunit protein uS12 (124 aa).

A 3-methylthioaspartic acid modification is found at Asp89.

It belongs to the universal ribosomal protein uS12 family. In terms of assembly, part of the 30S ribosomal subunit. Contacts proteins S8 and S17. May interact with IF1 in the 30S initiation complex.

Its function is as follows. With S4 and S5 plays an important role in translational accuracy. Interacts with and stabilizes bases of the 16S rRNA that are involved in tRNA selection in the A site and with the mRNA backbone. Located at the interface of the 30S and 50S subunits, it traverses the body of the 30S subunit contacting proteins on the other side and probably holding the rRNA structure together. The combined cluster of proteins S8, S12 and S17 appears to hold together the shoulder and platform of the 30S subunit. The protein is Small ribosomal subunit protein uS12 of Vibrio campbellii (strain ATCC BAA-1116).